We begin with the raw amino-acid sequence, 165 residues long: MASGVQVADEVCRIFYDMKVRKCSTPEEIKKRKKAVIFCLSADKKCIVVEEGKEILVGDVGATITDPFKHFVGMLPEKDCRYALYDASFETKESRKEELMFFLWAPEQAPLKSKMIYASSKDAIKKKFPGIKHEYQANGPEDLNRTCIAEKLGGSLIVAFEGSPV.

Ala-2 carries the N-acetylalanine modification. A Phosphoserine modification is found at Ser-3. The ADF-H domain occupies 4–153 (GVQVADEVCR…NRTCIAEKLG (150 aa)). Lys-19 is subject to N6-acetyllysine. The short motif at 30–34 (KKRKK) is the Nuclear localization signal element.

Belongs to the actin-binding proteins ADF family. Post-translationally, ISGylated. As to expression, widely expressed. Not found in skeletal muscle.

Functionally, actin-depolymerizing protein. Severs actin filaments (F-actin) and binds to actin monomers (G-actin). Acts in a pH-independent manner. This chain is Destrin (Dstn), found in Mus musculus (Mouse).